We begin with the raw amino-acid sequence, 489 residues long: Betaine aldehyde dehydrogenase (489 aa).

2 residues coordinate K(+): Thr-26 and Asp-93. 150 to 152 (GAW) contacts NAD(+). Residue Lys-162 is the Charge relay system of the active site. Residue 176 to 179 (KPSE) participates in NAD(+) binding. K(+) is bound at residue Val-180. NAD(+) is bound at residue 229 to 232 (GVET). Leu-245 lines the K(+) pocket. Glu-251 functions as the Proton acceptor in the catalytic mechanism. Positions 253, 285, and 386 each coordinate NAD(+). Cys-285 functions as the Nucleophile in the catalytic mechanism. At Cys-285 the chain carries Cysteine sulfenic acid (-SOH). The K(+) site is built by Lys-456 and Gly-459. Catalysis depends on Glu-463, which acts as the Charge relay system.

This sequence belongs to the aldehyde dehydrogenase family. In terms of assembly, dimer of dimers. It depends on K(+) as a cofactor.

It catalyses the reaction betaine aldehyde + NAD(+) + H2O = glycine betaine + NADH + 2 H(+). Its pathway is amine and polyamine biosynthesis; betaine biosynthesis via choline pathway; betaine from betaine aldehyde: step 1/1. Involved in the biosynthesis of the osmoprotectant glycine betaine. Catalyzes the irreversible oxidation of betaine aldehyde to the corresponding acid. This chain is Betaine aldehyde dehydrogenase, found in Burkholderia orbicola (strain AU 1054).